Consider the following 1062-residue polypeptide: SLIT-ROBO Rho GTPase-activating protein 1 (1062 aa).

The 296-residue stretch at Ser-19–Asp-314 folds into the F-BAR domain. Positions Gln-352–Ala-382 form a coiled coil. Ser-416 carries the post-translational modification Phosphoserine. The 191-residue stretch at Gly-481–Phe-671 folds into the Rho-GAP domain. In terms of domain architecture, SH3 spans Cys-720–Met-779. Residues Asp-785–Pro-799 are compositionally biased toward polar residues. The tract at residues Asp-785–Asp-931 is disordered. Residues Ser-812 and Ser-894 each carry the phosphoserine modification. A compositionally biased stretch (basic and acidic residues) spans Ser-899–Asp-908. Ser-909 bears the Phosphoserine mark. Positions Arg-914–Gly-923 are enriched in polar residues. Positions Glu-933–Lys-960 form a coiled coil. Residues Lys-974–Pro-988 are compositionally biased toward polar residues. 2 disordered regions span residues Lys-974–Ser-1013 and Lys-1028–Met-1062. Ser-976 bears the Phosphoserine mark. Residue Thr-978 is modified to Phosphothreonine. Over residues Ser-1004 to Ser-1013 the composition is skewed to low complexity. Phosphoserine is present on Ser-1009. Positions Gln-1053–Met-1062 are enriched in polar residues.

As to quaternary structure, homodimer. Forms a heterooligomer with SRGAP2 and SRGAP3 through its F-BAR domain. Interacts with CDC42 and RHOA. Interacts with FASLG. Interacts (via SH3 domain) with ROBO1.

Its function is as follows. GTPase-activating protein for RhoA and Cdc42 small GTPases. Together with CDC42 seems to be involved in the pathway mediating the repulsive signaling of Robo and Slit proteins in neuronal migration. SLIT2, probably through interaction with ROBO1, increases the interaction of SRGAP1 with ROBO1 and inactivates CDC42. The chain is SLIT-ROBO Rho GTPase-activating protein 1 (Srgap1) from Mus musculus (Mouse).